A 175-amino-acid polypeptide reads, in one-letter code: Adenine phosphoribosyltransferase (175 aa).

Belongs to the purine/pyrimidine phosphoribosyltransferase family. As to quaternary structure, homodimer.

Its subcellular location is the cytoplasm. The enzyme catalyses AMP + diphosphate = 5-phospho-alpha-D-ribose 1-diphosphate + adenine. It functions in the pathway purine metabolism; AMP biosynthesis via salvage pathway; AMP from adenine: step 1/1. Its function is as follows. Catalyzes a salvage reaction resulting in the formation of AMP, that is energically less costly than de novo synthesis. The chain is Adenine phosphoribosyltransferase from Lactobacillus gasseri (strain ATCC 33323 / DSM 20243 / BCRC 14619 / CIP 102991 / JCM 1131 / KCTC 3163 / NCIMB 11718 / NCTC 13722 / AM63).